The sequence spans 634 residues: Growth hormone receptor (634 aa).

A signal peptide spans 1 to 18; that stretch reads MDLWQLLLTLAVAGSSDA. The Extracellular segment spans residues 19–260; it reads FSGSEATPAF…NPSACEEDFQ (242 aa). Asparagine 46 carries an N-linked (GlcNAc...) asparagine glycan. Cysteine 56 and cysteine 66 are oxidised to a cystine. N-linked (GlcNAc...) asparagine glycosylation is present at asparagine 73. A disulfide bond links cysteine 97 and cysteine 108. N-linked (GlcNAc...) asparagine glycosylation is present at asparagine 111. A disulfide bridge links cysteine 122 with cysteine 136. The region spanning 147 to 250 is the Fibronectin type-III domain; sequence PPVGLNWTLL…EVLLITFPQM (104 aa). N-linked (GlcNAc...) asparagine glycosylation is found at asparagine 152, asparagine 157, and asparagine 196. The WSXWS motif signature appears at 236–240; that stretch reads YGKFS. The chain crosses the membrane as a helical span at residues 261–284; that stretch reads FPWFLIIMFGILGLAVTLFLLIFS. At 285 to 634 the chain is on the cytoplasmic side; the sequence is KQQRIKMLIL…STDQLNKIMP (350 aa). The interval 290 to 375 is required for JAK2 binding; it reads KMLILPPVPV…HEKSLNIFGA (86 aa). The Box 1 motif signature appears at 293–301; sequence ILPPVPVPK. A UbE motif motif is present at residues 336 to 345; that stretch reads DSWVEFIELD. Serine 337 carries the phosphoserine modification. Tyrosine 483 and tyrosine 591 each carry phosphotyrosine.

The protein belongs to the type I cytokine receptor family. Type 1 subfamily. On growth hormone (GH) binding, forms homodimers and binds JAK2 via a box 1-containing domain. Post-translationally, the soluble form (GHBP) is produced by phorbol ester-promoted proteolytic cleavage at the cell surface (shedding) by ADAM17/TACE. Shedding is inhibited by growth hormone (GH) binding to the receptor probably due to a conformational change in GHR rendering the receptor inaccessible to ADAM17. On GH binding, phosphorylated on tyrosine residues in the cytoplasmic domain by JAK2. In terms of processing, ubiquitinated by the ECS(SOCS2) complex following ligand-binding and phosphorylation by JAK2, leading to its degradation by the proteasome. Regulation by the ECS(SOCS2) complex acts as a negative feedback loop of growth hormone receptor signaling. Ubiquitination is not sufficient for GHR internalization.

It is found in the cell membrane. It localises to the secreted. In terms of biological role, receptor for pituitary gland growth hormone (GH1) involved in regulating postnatal body growth. On ligand binding, couples to the JAK2/STAT5 pathway. Functionally, the soluble form (GHBP) acts as a reservoir of growth hormone in plasma and may be a modulator/inhibitor of GH signaling. In Bos indicus (Zebu), this protein is Growth hormone receptor (GHR).